Reading from the N-terminus, the 531-residue chain is T-complex protein 1 subunit zeta (531 aa).

Ala-2 carries the post-translational modification N-acetylalanine. Lys-5 bears the N6-acetyllysine mark. An ADP-binding site is contributed by Gly-39. Residue Gly-39 coordinates ATP. Residue Asp-90 participates in Mg(2+) binding. ADP contacts are provided by Gly-91, Thr-92, Thr-93, Ser-94, Thr-158, and Lys-159. ATP is bound by residues Gly-91, Thr-92, and Thr-93. Lys-199 is modified (N6-acetyllysine). Ser-205 carries the phosphoserine modification. Lys-251 is covalently cross-linked (Glycyl lysine isopeptide (Lys-Gly) (interchain with G-Cter in SUMO2)). Residues Lys-287, Lys-365, Lys-377, and Lys-388 each carry the N6-acetyllysine modification. Ala-411 is an ADP binding site. Positions 411, 412, 496, and 501 each coordinate ATP. Asp-496 is an ADP binding site.

Belongs to the TCP-1 chaperonin family. In terms of assembly, component of the chaperonin-containing T-complex (TRiC), a hexadecamer composed of two identical back-to-back stacked rings enclosing a protein folding chamber. Each ring is made up of eight different subunits: TCP1/CCT1, CCT2, CCT3, CCT4, CCT5, CCT6A/CCT6, CCT7, CCT8. Interacts with PACRG.

It localises to the cytoplasm. It carries out the reaction ATP + H2O = ADP + phosphate + H(+). In terms of biological role, component of the chaperonin-containing T-complex (TRiC), a molecular chaperone complex that assists the folding of actin, tubulin and other proteins upon ATP hydrolysis. The TRiC complex mediates the folding of WRAP53/TCAB1, thereby regulating telomere maintenance. In Homo sapiens (Human), this protein is T-complex protein 1 subunit zeta (CCT6A).